The chain runs to 60 residues: Large ribosomal subunit protein uL30 (60 aa).

The protein belongs to the universal ribosomal protein uL30 family. In terms of assembly, part of the 50S ribosomal subunit.

The chain is Large ribosomal subunit protein uL30 from Lachnoclostridium phytofermentans (strain ATCC 700394 / DSM 18823 / ISDg) (Clostridium phytofermentans).